Here is a 294-residue protein sequence, read N- to C-terminus: Segregation and condensation protein A (294 aa).

The protein belongs to the ScpA family. In terms of assembly, component of a cohesin-like complex composed of ScpA, ScpB and the Smc homodimer, in which ScpA and ScpB bind to the head domain of Smc. The presence of the three proteins is required for the association of the complex with DNA.

The protein resides in the cytoplasm. Its function is as follows. Participates in chromosomal partition during cell division. May act via the formation of a condensin-like complex containing Smc and ScpB that pull DNA away from mid-cell into both cell halves. The protein is Segregation and condensation protein A of Ureaplasma parvum serovar 3 (strain ATCC 700970).